Here is a 530-residue protein sequence, read N- to C-terminus: Phosphoenolpyruvate carboxykinase (ATP) (530 aa).

R58, Y195, and K201 together coordinate substrate. ATP is bound by residues K201, H220, and 236–244 (GLSGTGKTT). Positions 201 and 220 each coordinate Mn(2+). D257 provides a ligand contact to Mn(2+). Residues E285, R321, 440-441 (RI), and T446 each bind ATP. Substrate is bound at residue R321.

It belongs to the phosphoenolpyruvate carboxykinase (ATP) family. Mn(2+) is required as a cofactor.

Its subcellular location is the cytoplasm. The enzyme catalyses oxaloacetate + ATP = phosphoenolpyruvate + ADP + CO2. It functions in the pathway carbohydrate biosynthesis; gluconeogenesis. In terms of biological role, involved in the gluconeogenesis. Catalyzes the conversion of oxaloacetate (OAA) to phosphoenolpyruvate (PEP) through direct phosphoryl transfer between the nucleoside triphosphate and OAA. This Staphylococcus aureus (strain MRSA252) protein is Phosphoenolpyruvate carboxykinase (ATP).